Consider the following 359-residue polypeptide: Histidinol-phosphate aminotransferase (359 aa).

Residue lysine 217 is modified to N6-(pyridoxal phosphate)lysine.

The protein belongs to the class-II pyridoxal-phosphate-dependent aminotransferase family. Histidinol-phosphate aminotransferase subfamily. In terms of assembly, homodimer. Requires pyridoxal 5'-phosphate as cofactor.

The catalysed reaction is L-histidinol phosphate + 2-oxoglutarate = 3-(imidazol-4-yl)-2-oxopropyl phosphate + L-glutamate. It participates in amino-acid biosynthesis; L-histidine biosynthesis; L-histidine from 5-phospho-alpha-D-ribose 1-diphosphate: step 7/9. The polypeptide is Histidinol-phosphate aminotransferase (Salmonella paratyphi A (strain ATCC 9150 / SARB42)).